Reading from the N-terminus, the 97-residue chain is Nuclear protein 2 (97 aa).

A disordered region spans residues 76 to 97; sequence LLNGQRKRRQRQLHPKMRTRLT. Residues 80–97 are compositionally biased toward basic residues; it reads QRKRRQRQLHPKMRTRLT.

The protein belongs to the NUPR family.

The protein resides in the nucleus. Acts as a transcriptional repressor by inhibiting gene expression at the NUPR1 promoter in a p53/TP53-dependent manner in cancer cells. Involved in the G1 cell cycle arrest, and in a decrease in cell viability and cell proliferation. Plays a role as a negative regulator of the protumoral factor NUPR1. This is Nuclear protein 2 from Homo sapiens (Human).